Here is a 114-residue protein sequence, read N- to C-terminus: Large ribosomal subunit protein bL19 (114 aa).

Belongs to the bacterial ribosomal protein bL19 family.

Its function is as follows. This protein is located at the 30S-50S ribosomal subunit interface and may play a role in the structure and function of the aminoacyl-tRNA binding site. The polypeptide is Large ribosomal subunit protein bL19 (Lactococcus lactis subsp. cremoris (strain MG1363)).